Consider the following 715-residue polypeptide: Protein sneaky (715 aa).

Over 1-32 (MLSLLTRPFLPIFCFLYGPQSEGSTRIQCLRR) the chain is Cytoplasmic. A helical membrane pass occupies residues 33–53 (FVTFLLGLVLGFLLWKLAALN). Topologically, residues 54–66 (FTLGRLFVNGATD) are extracellular. The chain crosses the membrane as a helical span at residues 67-87 (LYVFIIFVLVTGTIFMLSLPV). Topologically, residues 88 to 109 (RAVILLIFVALVGKSGRTYLRA) are cytoplasmic. The chain crosses the membrane as a helical span at residues 110 to 130 (VAFAFIISGPIANLVENAGEV). At 131–373 (ARVFVCTTVL…FERQKRIFNK (243 aa)) the chain is on the extracellular side. The chain crosses the membrane as a helical span at residues 374-394 (VMGILQKILCLFMLRMVYVSI). Topologically, residues 395–457 (NYYVKYLNDV…FSRTHHESTT (63 aa)) are cytoplasmic. The chain crosses the membrane as a helical span at residues 458–478 (VCFNLLQFLLELVTAGLFILI). Topologically, residues 479-553 (DHLVVELLQI…NAHVLPKKMY (75 aa)) are extracellular. The helical transmembrane segment at 554 to 574 (YQLILLYLIIIVLIYQSTTFL) threads the bilayer. Topologically, residues 575–715 (RMRRVICSFF…VEVYTYRKEK (141 aa)) are cytoplasmic. The RING-type; degenerate zinc finger occupies 655–691 (CMICRGLEDSTFTVCGNCGLPYCDDCAEDLNSVCFQC).

In terms of tissue distribution, specifically expressed in testis.

It localises to the cytoplasmic vesicle. Its subcellular location is the secretory vesicle. The protein resides in the acrosome membrane. The protein localises to the cytoplasm. It is found in the cytoplasmic vesicle membrane. Its function is as follows. Component of the sperm acrosome membrane. Required for breakdown of the sperm plasma membrane after sperm entry into the egg, which is an essential prerequisite for successful fertilization. This is Protein sneaky from Drosophila melanogaster (Fruit fly).